Reading from the N-terminus, the 229-residue chain is Orotidine 5'-phosphate decarboxylase (229 aa).

Substrate-binding positions include Asp-11, Lys-33, 60-69 (DLKFHDIPNT), Thr-119, Arg-180, Gln-189, Gly-209, and Arg-210. Catalysis depends on Lys-62, which acts as the Proton donor.

Belongs to the OMP decarboxylase family. Type 1 subfamily. As to quaternary structure, homodimer.

It catalyses the reaction orotidine 5'-phosphate + H(+) = UMP + CO2. It functions in the pathway pyrimidine metabolism; UMP biosynthesis via de novo pathway; UMP from orotate: step 2/2. In terms of biological role, catalyzes the decarboxylation of orotidine 5'-monophosphate (OMP) to uridine 5'-monophosphate (UMP). In Dichelobacter nodosus (strain VCS1703A), this protein is Orotidine 5'-phosphate decarboxylase.